The sequence spans 222 residues: UPF0758 protein Lcho_0695 (222 aa).

The MPN domain occupies 100–222 (VFDSPQAVRD…VVSFAERGLL (123 aa)). The Zn(2+) site is built by histidine 171, histidine 173, and aspartate 184. Positions 171 to 184 (HNHPSGVAEPSRAD) match the JAMM motif motif.

It belongs to the UPF0758 family.

This Leptothrix cholodnii (strain ATCC 51168 / LMG 8142 / SP-6) (Leptothrix discophora (strain SP-6)) protein is UPF0758 protein Lcho_0695.